The chain runs to 479 residues: Acetylcholine receptor subunit alpha-type acr-15 (479 aa).

The first 18 residues, 1–18 (MLLPILLHFLLLITQLNG), serve as a signal peptide directing secretion. The Extracellular portion of the chain corresponds to 19 to 230 (SPAEVRLIND…HLRRRTLYYS (212 aa)). N-linked (GlcNAc...) asparagine glycosylation is found at N60 and N92. A disulfide bond links C146 and C160. N-linked (GlcNAc...) asparagine glycosylation is present at N200. A disulfide bridge links C208 with C209. A helical transmembrane segment spans residues 231 to 251 (FNLIAPVLLTMILVILGFTVS). Residues 252–257 (PETCEK) lie on the Cytoplasmic side of the membrane. The helical transmembrane segment at 258–278 (VGLQISVSLAICIFLTIMSEL) threads the bilayer. Residues 279 to 285 (TPQTSEA) lie on the Extracellular side of the membrane. The helical transmembrane segment at 286-306 (VPLLGVFFHTCNFISVLATSF) threads the bilayer. Residues 307-453 (TVYVQSFHFR…WRFAAIVVDR (147 aa)) lie on the Cytoplasmic side of the membrane. Residues 454–474 (LCLLAFSLLIVVVSIIIALRA) form a helical membrane-spanning segment. At 475–479 (PYLFA) the chain is on the extracellular side.

It belongs to the ligand-gated ion channel (TC 1.A.9) family. Acetylcholine receptor (TC 1.A.9.1) subfamily. Expressed in interneurons, motor neurons, pharyngeal neurons and muscles.

It is found in the cell membrane. Its subcellular location is the postsynaptic cell membrane. In terms of biological role, after binding acetylcholine, the AChR responds by an extensive change in conformation that affects all subunits and leads to opening of an ion-conducting channel across the plasma membrane. Activity is required in glutamatergic neurons to mediate nicotine-induced and nicotine-motivated behaviors. The polypeptide is Acetylcholine receptor subunit alpha-type acr-15 (Caenorhabditis elegans).